The sequence spans 113 residues: Non-specific lipid-transfer protein (113 aa).

Positions 1–24 (AQVMLMAVALVLMLAAVPRAAVAI) are cleaved as a signal peptide. Intrachain disulfides connect cysteine 26/cysteine 73, cysteine 36/cysteine 50, cysteine 51/cysteine 96, and cysteine 71/cysteine 110. Aspartate 30 is lipidated: Cis-14-hydroxy-10,13-dioxo-7-heptadecenoic acid aspartate ester.

This sequence belongs to the plant LTP family.

Plant non-specific lipid-transfer proteins transfer phospholipids as well as galactolipids across membranes. May play a role in wax or cutin deposition in the cell walls of expanding epidermal cells and certain secretory tissues. This is Non-specific lipid-transfer protein from Triticum aestivum (Wheat).